We begin with the raw amino-acid sequence, 252 residues long: Type I iodothyronine deiodinase (252 aa).

Topologically, residues Met1–Lys17 are extracellular. The chain crosses the membrane as a helical; Signal-anchor for type III membrane protein span at residues Ala18–Phe38. The Cytoplasmic segment spans residues Pro39 to Lys252. The active site involves Sec130. Position 130 (Sec130) is a non-standard amino acid, selenocysteine.

This sequence belongs to the iodothyronine deiodinase family. Predominantly monomer. Can form homodimers but homodimerization is not essential for enzyme activity.

The protein localises to the cell membrane. Its subcellular location is the endoplasmic reticulum membrane. It is found in the basolateral cell membrane. The enzyme catalyses 3,3',5-triiodo-L-thyronine + iodide + A + H(+) = L-thyroxine + AH2. It carries out the reaction 3,3',5'-triiodo-L-thyronine + iodide + A + H(+) = L-thyroxine + AH2. It catalyses the reaction 3,3'-diiodo-L-thyronine + iodide + A + H(+) = 3,3',5'-triiodo-L-thyronine + AH2. The catalysed reaction is 3,3'-diiodo-L-thyronine + iodide + A + H(+) = 3,3',5-triiodo-L-thyronine + AH2. The enzyme catalyses 3'-iodo-L-thyronine + iodide + A + H(+) = 3',5'-diiodo-L-thyronine + AH2. It carries out the reaction 3-iodo-L-thyronine + iodide + A + H(+) = 3,5-diiodo-L-thyronine + AH2. It catalyses the reaction 3-iodo-L-thyronine + iodide + A + H(+) = 3,3'-diiodo-L-thyronine + AH2. The catalysed reaction is 3,3'-diiodothyronamine + iodide + A + H(+) = 3,3',5'-triiodothyronamine + AH2. The enzyme catalyses 3'-iodothyronamine + iodide + A + H(+) = 3',5'-diiodothyronamine + AH2. It carries out the reaction 3-iodothyronamine + iodide + A + H(+) = 3,3'-diiodothyronamine + AH2. It catalyses the reaction 3,3'-diiodothyronamine + iodide + A + H(+) = 3,3',5-triiodothyronamine + AH2. The catalysed reaction is 3-iodothyronamine + iodide + A + H(+) = 3,5-diiodothyronamine + AH2. The enzyme catalyses 3,3'-diiodo-L-thyronine sulfate + iodide + A + H(+) = 3,3',5'-triiodo-L-thyronine sulfate + AH2. It carries out the reaction 3,3',5'-triiodo-L-thyronine sulfate + iodide + A + H(+) = L-thyroxine sulfate + AH2. It catalyses the reaction 3,3'-diiodo-L-thyronine sulfate + iodide + A + H(+) = 3,3',5-triiodo-L-thyronine sulfate + AH2. Its activity is regulated as follows. Lacks sensitivity to 6-n-propylthiouracil. Plays a crucial role in the metabolism of thyroid hormones (TH) and has specific roles in TH activation and inactivation by deiodination. Catalyzes the deiodination of L-thyroxine (T4) to 3,5,3'-triiodothyronine (T3) and 3,3',5'-triiodothyronine (rT3) to 3,3'-diiodothyronine (3,3'-T2) via outer-ring deiodination (ORD). Catalyzes the deiodiantion of T4 to rT3 and T3 to 3,3'-T2 via inner-ring deiodination (IRD). Catalyzes the deiodination of 3',5'-diiodothyronine (3',5'-T2) to 3'-monoiodothyronine (3'-T1) via ORD. Catalyzes the deiodination of 3,5-diiodothyronine (3,5-T2) to 3-monoiodothyronine (3-T1) and 3,3'-T2 to 3-T1 via IRD. Catalyzes the phenolic ring deiodinations of 3,3',5'-triiodothyronamine, 3',5'-diiodothyronamine and 3,3'-diiodothyronamine as well as tyrosyl ring deiodinations of 3,5,3'-triiodothyronamine and 3,5-diiodothyronamine. Catalyzes the deiodination of L-thyroxine sulfate and 3,3',5-triiodo-L-thyronine sulfate via IRD and of 3,3',5'-triiodo-L-thyronine sulfate via ORD. In Xenopus laevis (African clawed frog), this protein is Type I iodothyronine deiodinase (dio1).